A 192-amino-acid polypeptide reads, in one-letter code: MKDFFLFLGKFFKHGTAIASLAPSSPWLSRTTVRNIPWENARVVVELGAGTGPITKVIADRVHPDCRVIVLERDPDFARLLRERFANRANFDVVEGDVRDLTQILQQRGIEQADFVVSGLPVPSFPKELQRDLFRVVKQVLAPSGTFNQITEMPWVYQRFYRRFFDEVTFVFEPRNLPPAGAYFCRGVKESF.

This sequence belongs to the methyltransferase superfamily.

It carries out the reaction an N(2)-[(3R)-3-(2-saturated-acyloxy)acyl]-L-ornithine lipid + 3 S-adenosyl-L-methionine = an N,N,N-trimethylornithine lipid + 3 S-adenosyl-L-homocysteine + 3 H(+). Functionally, catalyzes the 3-fold methylation of ornithine lipids. Forms ornithine lipids that are mono-, di-, and trimethylated on the delta-nitrogen of the ornithine head group. This is Ornithine lipid N-methyltransferase from Singulisphaera acidiphila (strain ATCC BAA-1392 / DSM 18658 / VKM B-2454 / MOB10).